Consider the following 396-residue polypeptide: MKLTKRNPILVLVNDFVIDSPLPTNLTYFWNFGSLLGVNLVILIISGLTLAMHYTPNTLLAFSSVEHIMRDVNNGWLLRYIHANGASFFFIWVYLHIGRNLYYGSYRSPRGLLWSIGVVIFILMMATAFIGYVLPWGQMSFWGATVITNLLSAIPWIGTDFVLFVWGGFSVDNATLNRFFSLHYLLPFILAALVVMHLLALHQDGSNNPEGISSSSDRLRFHPYFTSKDLVGFVWMAILLSIFVFFAPYYLGHPDNSIPANPLVTPHSIVPEWYFLPFYAILRAIPSKLGGVIAMFGALLILFPLALIHTNNVRSNRYRPLLNLLFWIFVFNFFVLLWVGAKPIAQPYILIGQISTIIYFLYFVILMILGCIMTYIYTKSNCFFIYFFLYFGCSIL.

Helical transmembrane passes span 32–52 (FGSL…TLAM), 76–98 (WLLR…LHIG), 113–133 (LWSI…IGYV), and 179–199 (FFSL…MHLL). Heme b contacts are provided by histidine 82 and histidine 96. Histidine 183 and histidine 197 together coordinate heme b. Histidine 202 contacts a ubiquinone. Transmembrane regions (helical) follow at residues 225 to 245 (FTSK…IFVF), 289 to 309 (LGGV…ALIH), 321 to 341 (LLNL…WVGA), and 348 to 368 (YILI…ILMI).

This sequence belongs to the cytochrome b family. As to quaternary structure, fungal cytochrome b-c1 complex contains 10 subunits; 3 respiratory subunits, 2 core proteins and 5 low-molecular weight proteins. Cytochrome b-c1 complex is a homodimer. Heme b serves as cofactor.

It is found in the mitochondrion inner membrane. Functionally, component of the ubiquinol-cytochrome c reductase complex (complex III or cytochrome b-c1 complex) that is part of the mitochondrial respiratory chain. The b-c1 complex mediates electron transfer from ubiquinol to cytochrome c. Contributes to the generation of a proton gradient across the mitochondrial membrane that is then used for ATP synthesis. This Spizellomyces punctatus protein is Cytochrome b (cob).